Here is a 287-residue protein sequence, read N- to C-terminus: MKKKKRFKQKLLIASLVIGLMAVLSGCGYSTDPITSESTGFWSHYIVFPLSWTITWFSDLFGGSYAVGIIVVTILIRLLIMPLMIKQLKSQKAMTNLQPKIKELQEKYSSKDNETKQKLQQETMRLYQENSVNPMMGCLPLLIQMPILLGFYQAISRTAEIKTDSFLWMQLGNPDPYYILPVVAALTTFLSSKISMMGQTQQNKSMAMIVYIMPVMILFMGITLPSALALYWIIGNIFTVFQTLLINNPFKNKREQEALAAAQVAEDRLKKKAANMKASKKGGKKRK.

A signal peptide spans 1–26 (MKKKKRFKQKLLIASLVIGLMAVLSG). Residue Cys27 is the site of N-palmitoyl cysteine attachment. Cys27 is lipidated: S-diacylglycerol cysteine. The next 5 helical transmembrane spans lie at 65–85 (YAVGIIVVTILIRLLIMPLMI), 135–155 (MMGCLPLLIQMPILLGFYQAI), 178–198 (YILPVVAALTTFLSSKISMMG), 207–224 (AMIVYIMPVMILFMGITL), and 228–250 (LALYWIIGNIFTVFQTLLINNPF).

The protein belongs to the OXA1/ALB3/YidC family. Type 2 subfamily.

Its subcellular location is the cell membrane. Its function is as follows. Required for the insertion and/or proper folding and/or complex formation of integral membrane proteins into the membrane. Involved in integration of membrane proteins that insert both dependently and independently of the Sec translocase complex, as well as at least some lipoproteins. This is Membrane protein insertase YidC 2 from Listeria monocytogenes serovar 1/2a (strain ATCC BAA-679 / EGD-e).